The following is a 275-amino-acid chain: NH(3)-dependent NAD(+) synthetase (275 aa).

50–57 (GISGGVDS) is an ATP binding site. D56 serves as a coordination point for Mg(2+). R147 contributes to the deamido-NAD(+) binding site. Residue T167 participates in ATP binding. Mg(2+) is bound at residue E172. Deamido-NAD(+) contacts are provided by K180 and D187. ATP contacts are provided by K196 and T218. 267–268 (HK) is a binding site for deamido-NAD(+).

This sequence belongs to the NAD synthetase family. In terms of assembly, homodimer.

It carries out the reaction deamido-NAD(+) + NH4(+) + ATP = AMP + diphosphate + NAD(+) + H(+). It participates in cofactor biosynthesis; NAD(+) biosynthesis; NAD(+) from deamido-NAD(+) (ammonia route): step 1/1. Catalyzes the ATP-dependent amidation of deamido-NAD to form NAD. Uses ammonia as a nitrogen source. This is NH(3)-dependent NAD(+) synthetase from Ectopseudomonas mendocina (strain ymp) (Pseudomonas mendocina).